We begin with the raw amino-acid sequence, 380 residues long: N5-carboxyaminoimidazole ribonucleotide synthase (380 aa).

ATP is bound by residues R108, K148, 153-159, 183-186, E191, H214, and 268-269; these read GYDGKGQ, ESWV, and NE. Residues 112–298 form the ATP-grasp domain; sequence KKAIQSAGCE…QFEQHIRAVC (187 aa).

This sequence belongs to the PurK/PurT family. As to quaternary structure, homodimer.

The catalysed reaction is 5-amino-1-(5-phospho-beta-D-ribosyl)imidazole + hydrogencarbonate + ATP = 5-carboxyamino-1-(5-phospho-D-ribosyl)imidazole + ADP + phosphate + 2 H(+). The protein operates within purine metabolism; IMP biosynthesis via de novo pathway; 5-amino-1-(5-phospho-D-ribosyl)imidazole-4-carboxylate from 5-amino-1-(5-phospho-D-ribosyl)imidazole (N5-CAIR route): step 1/2. Functionally, catalyzes the ATP-dependent conversion of 5-aminoimidazole ribonucleotide (AIR) and HCO(3)(-) to N5-carboxyaminoimidazole ribonucleotide (N5-CAIR). The protein is N5-carboxyaminoimidazole ribonucleotide synthase of Bacillus subtilis (strain 168).